We begin with the raw amino-acid sequence, 506 residues long: Gamma-aminobutyric acid receptor subunit epsilon (506 aa).

The signal sequence occupies residues M1–Q17. At W18 to R277 the chain is on the extracellular side. The interval A32–P65 is disordered. Basic and acidic residues predominate over residues P50–P65. The N-linked (GlcNAc...) asparagine glycan is linked to N135. C196 and C210 are joined by a disulfide. Residue N253 is glycosylated (N-linked (GlcNAc...) asparagine). The chain crosses the membrane as a helical span at residues F278–V298. At S299 to A308 the chain is on the cytoplasmic side. The chain crosses the membrane as a helical span at residues A309–S328. Over R329–Y344 the chain is Extracellular. The helical transmembrane segment at I345–L365 threads the bilayer. Over T366–R485 the chain is Cytoplasmic. A helical membrane pass occupies residues V486 to L506.

Belongs to the ligand-gated ion channel (TC 1.A.9) family. Gamma-aminobutyric acid receptor (TC 1.A.9.5) subfamily. GABRE sub-subfamily. In terms of assembly, heteropentamer, formed by a combination of alpha (GABRA1-6), beta (GABRB1-3), gamma (GABRG1-3), delta (GABRD), epsilon (GABRE), rho (GABRR1-3), pi (GABRP) and theta (GABRQ) chains, each subunit exhibiting distinct physiological and pharmacological properties. Expressed in brain and heart. Strongly expressed in locus ceruleus from the first postnatal day. Weakly expressed in other brainstem nuclei and in the hypothalamus. Found in the cerebral cortex of pups.

Its subcellular location is the cell membrane. It is found in the postsynaptic cell membrane. It catalyses the reaction chloride(in) = chloride(out). Its function is as follows. Epsilon subunit of the heteropentameric ligand-gated chloride channel gated by gamma-aminobutyric acid (GABA), a major inhibitory neurotransmitter in the brain. GABA-gated chloride channels, also named GABA(A) receptors (GABAAR), consist of five subunits arranged around a central pore and contain GABA active binding site(s) located at the alpha and beta subunit interfaces. When activated by GABA, GABAARs selectively allow the flow of chloride anions across the cell membrane down their electrochemical gradient. GABARs containing epsilon subunit may also permit spontaneous chloride channel activity while preserving the structural information required for GABA-gated openings. GABARs containing epsilon subunit may regulate cardiac function. This chain is Gamma-aminobutyric acid receptor subunit epsilon, found in Rattus norvegicus (Rat).